A 118-amino-acid polypeptide reads, in one-letter code: UPF0251 protein Teth39_0655 (118 aa).

This sequence belongs to the UPF0251 family.

This Thermoanaerobacter pseudethanolicus (strain ATCC 33223 / 39E) (Clostridium thermohydrosulfuricum) protein is UPF0251 protein Teth39_0655.